We begin with the raw amino-acid sequence, 218 residues long: Thiopurine S-methyltransferase (218 aa).

4 residues coordinate S-adenosyl-L-methionine: Trp-10, Leu-45, Glu-66, and Arg-123.

It belongs to the class I-like SAM-binding methyltransferase superfamily. TPMT family.

The protein resides in the cytoplasm. The catalysed reaction is S-adenosyl-L-methionine + a thiopurine = S-adenosyl-L-homocysteine + a thiopurine S-methylether.. Functionally, involved in the biological cycling of tellurium and selenium. Tellurium resistance (Ter) mechanism. The polypeptide is Thiopurine S-methyltransferase (Pseudomonas syringae pv. pisi).